The chain runs to 448 residues: Receptor homology region, transmembrane domain- and RING domain-containing protein 2 (448 aa).

The first 20 residues, M1–S20, serve as a signal peptide directing secretion. Residues K21–S163 are Lumenal-facing. Residues N28 and N74 are each glycosylated (N-linked (GlcNAc...) asparagine). The PA domain maps to D60–A144. A disulfide bridge links C62 with C87. A helical transmembrane segment spans residues I164–F184. The Cytoplasmic portion of the chain corresponds to V185–C448. An RING-type; atypical zinc finger spans residues C232–K274. The segment covering Q344 to S378 has biased composition (low complexity). Disordered regions lie at residues Q344 to I380 and M402 to L424. Positions S408–P423 are enriched in polar residues.

It localises to the protein storage vacuole membrane. The protein localises to the golgi apparatus membrane. Functionally, involved in the trafficking of vacuolar proteins. May function as a sorting receptor for protein trafficking to the protein storage vacuole (PSV). In Arabidopsis thaliana (Mouse-ear cress), this protein is Receptor homology region, transmembrane domain- and RING domain-containing protein 2 (RMR2).